The primary structure comprises 310 residues: Homoserine kinase (310 aa).

An ATP-binding site is contributed by 95–105 (PQSRGLGSSAA).

Belongs to the GHMP kinase family. Homoserine kinase subfamily.

It is found in the cytoplasm. The catalysed reaction is L-homoserine + ATP = O-phospho-L-homoserine + ADP + H(+). It functions in the pathway amino-acid biosynthesis; L-threonine biosynthesis; L-threonine from L-aspartate: step 4/5. In terms of biological role, catalyzes the ATP-dependent phosphorylation of L-homoserine to L-homoserine phosphate. The sequence is that of Homoserine kinase from Corynebacterium kroppenstedtii (strain DSM 44385 / JCM 11950 / CIP 105744 / CCUG 35717).